The chain runs to 454 residues: 3-phosphoshikimate 1-carboxyvinyltransferase (454 aa).

Positions 1 to 31 (MSENHSEGASRPVISRRPAAGLRADHPVHVP) are disordered. Residues lysine 34, serine 35, and arginine 39 each contribute to the 3-phosphoshikimate site. Residue lysine 34 coordinates phosphoenolpyruvate. Residues glycine 107 and arginine 135 each coordinate phosphoenolpyruvate. 3-phosphoshikimate contacts are provided by serine 180, glutamine 182, aspartate 334, and lysine 361. Glutamine 182 contributes to the phosphoenolpyruvate binding site. The active-site Proton acceptor is the aspartate 334. Arginine 365 and arginine 409 together coordinate phosphoenolpyruvate.

This sequence belongs to the EPSP synthase family. Monomer.

It is found in the cytoplasm. The catalysed reaction is 3-phosphoshikimate + phosphoenolpyruvate = 5-O-(1-carboxyvinyl)-3-phosphoshikimate + phosphate. The protein operates within metabolic intermediate biosynthesis; chorismate biosynthesis; chorismate from D-erythrose 4-phosphate and phosphoenolpyruvate: step 6/7. Functionally, catalyzes the transfer of the enolpyruvyl moiety of phosphoenolpyruvate (PEP) to the 5-hydroxyl of shikimate-3-phosphate (S3P) to produce enolpyruvyl shikimate-3-phosphate and inorganic phosphate. The polypeptide is 3-phosphoshikimate 1-carboxyvinyltransferase (Granulibacter bethesdensis (strain ATCC BAA-1260 / CGDNIH1)).